Consider the following 252-residue polypeptide: UPF0246 protein LJ_0535 (252 aa).

This sequence belongs to the UPF0246 family.

The polypeptide is UPF0246 protein LJ_0535 (Lactobacillus johnsonii (strain CNCM I-12250 / La1 / NCC 533)).